A 325-amino-acid polypeptide reads, in one-letter code: Xylosidase/arabinosidase (325 aa).

The active-site Proton acceptor is Asp-16. The Proton donor role is filled by Glu-224.

This sequence belongs to the glycosyl hydrolase 43 family.

The catalysed reaction is Hydrolysis of (1-&gt;4)-beta-D-xylans, to remove successive D-xylose residues from the non-reducing termini.. The enzyme catalyses Hydrolysis of terminal non-reducing alpha-L-arabinofuranoside residues in alpha-L-arabinosides.. This is Xylosidase/arabinosidase (xsa) from Bacteroides ovatus.